The following is a 101-amino-acid chain: Small ribosomal subunit protein uS10 (101 aa).

It belongs to the universal ribosomal protein uS10 family. Part of the 30S ribosomal subunit.

Functionally, involved in the binding of tRNA to the ribosomes. The sequence is that of Small ribosomal subunit protein uS10 from Mycoplasmopsis synoviae (strain 53) (Mycoplasma synoviae).